The chain runs to 160 residues: N-acetyltransferase Pat (160 aa).

An N-acetyltransferase domain is found at 5-148 (IKIRKATKED…VYGEMRLTER (144 aa)). Residues L79, V81, T87, G89, G91, T92, N118, K123, and K127 each coordinate CoA.

Belongs to the acetyltransferase family. GNAT subfamily.

The enzyme catalyses L-lysyl-[protein] + acetyl-CoA = N(6)-acetyl-L-lysyl-[protein] + CoA + H(+). Its function is as follows. Modulates activity of albA1, the major archaeal DNA compaction protein, by decreasing albA1's nucleic acid binding affinity through acetylation of 'Lys-16'. This chain is N-acetyltransferase Pat, found in Saccharolobus solfataricus (strain ATCC 35092 / DSM 1617 / JCM 11322 / P2) (Sulfolobus solfataricus).